A 275-amino-acid polypeptide reads, in one-letter code: Fos-related antigen 1 (275 aa).

Disordered regions lie at residues 1–33 (MYRD…QTVQ) and 71–115 (TYPQ…VRRE). The segment covering 7–33 (EPGPSSGAGSAYGRPAQPQQAQTQTVQ) has biased composition (low complexity). Residues 107–170 (EERRRVRRER…ERLELVLEAH (64 aa)) enclose the bZIP domain. A basic motif region spans residues 109 to 129 (RRRVRRERNKLAAAKCRNRRK). The tract at residues 135 to 163 (LQAETDKLEDEKSGLQREIEELQKQKERL) is leucine-zipper. A compositionally biased stretch (basic and acidic residues) spans 171–184 (RPICKIPEEDKKDT). The disordered stretch occupies residues 171-275 (RPICKIPEED…PLGSPTLLAL (105 aa)). Low complexity-rich tracts occupy residues 185 to 194 (GGTSSTSGAG), 219 to 237 (LHTP…TPSL), and 256 to 275 (SSSS…LLAL). S269 carries the phosphoserine modification.

The protein belongs to the bZIP family. Fos subfamily. In terms of assembly, heterodimer. Interacts with the BAF multiprotein chromatin-remodeling complex subunits SMARCB1 and SMARCD1. Interacts with ARID1A and JUN.

It is found in the nucleus. In Rattus norvegicus (Rat), this protein is Fos-related antigen 1 (Fosl1).